The sequence spans 147 residues: MGRLMGLDVGSRTVGVAVSDMLGWTAQGVEIVQINEDEQEFGLDRIAELVKENEVVGFVLGLPKNMNNTSGPRVEAAKAYGELLEEKFNLPIDFIDERLTTVEAERMLVEQADASRKKRKKVIDKLAASLILQNYLDAKGKLLKELN.

It belongs to the YqgF nuclease family.

Its subcellular location is the cytoplasm. Its function is as follows. Could be a nuclease involved in processing of the 5'-end of pre-16S rRNA. The chain is Putative pre-16S rRNA nuclease from Ligilactobacillus salivarius (strain UCC118) (Lactobacillus salivarius).